The following is a 640-amino-acid chain: MGERTLHAAVPTPGYPESESIMMAPICLVENQEEQLTVNSKALEILDKISQPVVVVAIVGLYRTGKSYLMNRLAGKRNGFPLGSTVQSETKGIWMWCVPHLSKPNHTLVLLDTEGLGDVEKSNPKNDSWIFALAVLLSSSFVYNSVSTINHQALEQLHYVTELAELIRAKSCPRPDEAEDSSEFASFFPDFIWTVRDFTLELKLDGNPITEDEYLENALKLIPGKNPKIQNSNMPRECIRHFFRKRKCFVFDRPTNDKQYLNHMDEVPEENLERHFLMQSDNFCSYIFTHAKTKTLREGIIVTGKRLGTLVVTYVDAINSGAVPCLENAVTALAQLENPAAVQRAADHYSQQMAQQLRLPTDTLQELLDVHAACEREAIAVFMEHSFKDENHEFQKKLVDTIEKKKGDFVLQNEEASAKYCQAELKRLSEHLTESILRGIFSVPGGHNLYLEEKKQVEWDYKLVPRKGVKANEVLQNFLQSQVVVEESILQSDKALTAGEKAIAAERAMKEAAEKEQELLREKQKEQQQMMEAQERSFQEYMAQMEKKLEEERENLLREHERLLKHKLKVQEEMLKEEFQKKSEQLNKEINQLKEKIESTKNEQLRLLKILDMASNIMIVTLPGASKLLGVGTKYLGSRI.

A GTPase domain (Globular) region spans residues 1–325 (MGERTLHAAV…DAINSGAVPC (325 aa)). In terms of domain architecture, GB1/RHD3-type G spans 50–292 (SQPVVVVAIV…FCSYIFTHAK (243 aa)). GTP is bound by residues 60–67 (GLYRTGKS), 82–84 (LGS), and 112–116 (DTEGL). Residues 499 to 612 (GEKAIAAERA…EQLRLLKILD (114 aa)) are a coiled coil.

This sequence belongs to the TRAFAC class dynamin-like GTPase superfamily. GB1/RHD3 GTPase family. GB1 subfamily. In terms of assembly, heterodimer with other family members, including GBP1, GBP2 and GBP5. Dimerization regulates subcellular location. Interacts with IRF7; preventing interaction between TRAF6 and IRF7, resulting in impaired TRAF6-mediated IRF7 ubiquitination. Post-translationally, (Microbial infection) Ubiquitinated by S.flexneri IpaH9.8, leading to its degradation by the proteasome, thereby preventing its ability to promote host defense against bacterial infection.

The protein localises to the golgi apparatus membrane. It is found in the cytoplasm. The protein resides in the nucleus. It localises to the perinuclear region. The enzyme catalyses GTP + H2O = GDP + phosphate + H(+). In terms of biological role, interferon (IFN)-inducible GTPase that plays important roles in innate immunity against a diverse range of bacterial, viral and protozoan pathogens. Negatively regulates the antiviral response by inhibiting activation of IRF7 transcription factor. In Homo sapiens (Human), this protein is Guanylate-binding protein 4.